Consider the following 438-residue polypeptide: Aspartate--tRNA(Asp/Asn) ligase (438 aa).

An L-aspartate-binding site is contributed by Glu176. Residues Gln198–Lys201 are aspartate. Arg220 contacts L-aspartate. ATP contacts are provided by residues Arg220–Glu222, Arg228–Leu230, and Glu361. Mg(2+) contacts are provided by Glu361 and Ser364. L-aspartate-binding residues include Ser364 and Arg368. Gly409–Arg412 lines the ATP pocket.

This sequence belongs to the class-II aminoacyl-tRNA synthetase family. Type 2 subfamily. In terms of assembly, homodimer. It depends on Mg(2+) as a cofactor.

It is found in the cytoplasm. It catalyses the reaction tRNA(Asx) + L-aspartate + ATP = L-aspartyl-tRNA(Asx) + AMP + diphosphate. Functionally, aspartyl-tRNA synthetase with relaxed tRNA specificity since it is able to aspartylate not only its cognate tRNA(Asp) but also tRNA(Asn). Reaction proceeds in two steps: L-aspartate is first activated by ATP to form Asp-AMP and then transferred to the acceptor end of tRNA(Asp/Asn). In Methanococcus maripaludis (strain DSM 14266 / JCM 13030 / NBRC 101832 / S2 / LL), this protein is Aspartate--tRNA(Asp/Asn) ligase.